The following is a 207-amino-acid chain: Large ribosomal subunit protein uL4 (207 aa).

The disordered stretch occupies residues 47-77 (GTADTKTRAEVSGGGRKPWRQKGTGRARHGS). Residues 63-77 (KPWRQKGTGRARHGS) show a composition bias toward basic residues.

Belongs to the universal ribosomal protein uL4 family. As to quaternary structure, part of the 50S ribosomal subunit.

One of the primary rRNA binding proteins, this protein initially binds near the 5'-end of the 23S rRNA. It is important during the early stages of 50S assembly. It makes multiple contacts with different domains of the 23S rRNA in the assembled 50S subunit and ribosome. Its function is as follows. Forms part of the polypeptide exit tunnel. In Symbiobacterium thermophilum (strain DSM 24528 / JCM 14929 / IAM 14863 / T), this protein is Large ribosomal subunit protein uL4.